Reading from the N-terminus, the 505-residue chain is Deoxyguanosinetriphosphate triphosphohydrolase (505 aa).

Residues 66 to 273 (RLTHSMEVQQ…MEAADDISYC (208 aa)) enclose the HD domain.

This sequence belongs to the dGTPase family. Type 1 subfamily. In terms of assembly, homotetramer. The cofactor is Mg(2+).

It catalyses the reaction dGTP + H2O = 2'-deoxyguanosine + triphosphate + H(+). In terms of biological role, dGTPase preferentially hydrolyzes dGTP over the other canonical NTPs. The sequence is that of Deoxyguanosinetriphosphate triphosphohydrolase from Escherichia coli O81 (strain ED1a).